The following is a 295-amino-acid chain: 4-diphosphocytidyl-2-C-methyl-D-erythritol kinase (295 aa).

The active site involves Lys-15. Residue 101 to 111 (PIAAGLGGGSS) participates in ATP binding. Residue Asp-143 is part of the active site.

It belongs to the GHMP kinase family. IspE subfamily.

It catalyses the reaction 4-CDP-2-C-methyl-D-erythritol + ATP = 4-CDP-2-C-methyl-D-erythritol 2-phosphate + ADP + H(+). Its pathway is isoprenoid biosynthesis; isopentenyl diphosphate biosynthesis via DXP pathway; isopentenyl diphosphate from 1-deoxy-D-xylulose 5-phosphate: step 3/6. In terms of biological role, catalyzes the phosphorylation of the position 2 hydroxy group of 4-diphosphocytidyl-2C-methyl-D-erythritol. This Caulobacter vibrioides (strain ATCC 19089 / CIP 103742 / CB 15) (Caulobacter crescentus) protein is 4-diphosphocytidyl-2-C-methyl-D-erythritol kinase.